A 525-amino-acid polypeptide reads, in one-letter code: Anti-silencing protein 2 (525 aa).

The tract at residues 467 to 525 (LPRVPTDSPQLPSKDKSQETAKKDDRPKLVANEPVTLDTSTPPVAQSLADSKHCSGLHK) is disordered. Residues 479–494 (SKDKSQETAKKDDRPK) are compositionally biased toward basic and acidic residues.

Derepression of silent mating type loci when overexpressed. This is Anti-silencing protein 2 (ASF2) from Saccharomyces cerevisiae (strain ATCC 204508 / S288c) (Baker's yeast).